A 1007-amino-acid polypeptide reads, in one-letter code: Kinesin-like protein KIN-7D, chloroplastic (1007 aa).

The N-terminal 53 residues, 1–53 (MATRPASRQRRASSAAAAVAVVRSSPQPQQQQQQQLPIPQSGSPTSTTTTTTS), are a transit peptide targeting the chloroplast. Over residues 1-55 (MATRPASRQRRASSAAAAVAVVRSSPQPQQQQQQQLPIPQSGSPTSTTTTTTSSS) the composition is skewed to low complexity. Residues 1–79 (MATRPASRQR…LFAGLDEDPA (79 aa)) are disordered. The region spanning 83–402 (NVTVTVRFRP…LKFAHRAKRI (320 aa)) is the Kinesin motor domain. An ATP-binding site is contributed by 163–170 (GVTSSGKT). The stretch at 403-495 (EVQASQNKII…QRLTKLILVS (93 aa)) forms a coiled coil. Positions 579-607 (ILTSSEGDKSSLTKSTAPSTPIGESVNFP) are disordered. Coiled-coil stretches lie at residues 687-716 (NNEK…ERQI), 754-791 (AADN…TLQA), and 836-907 (SVEI…SVRS). The disordered stretch occupies residues 901 to 941 (ELASVRSPTPRRANSGLRGTRRDSISRRHEPAPRRDNNAGY). A compositionally biased stretch (basic and acidic residues) spans 920–941 (TRRDSISRRHEPAPRRDNNAGY). Residues 942-982 (EREKALEAVLMEKEQKEAELQRRIEESKQKEAFLESELANM) adopt a coiled-coil conformation.

Belongs to the TRAFAC class myosin-kinesin ATPase superfamily. Kinesin family. KIN-7 subfamily. Binds microtubules. Homodimer. The cofactor is Mg(2+).

The protein resides in the plastid. It is found in the chloroplast. Functionally, probable minus end-directed motor protein with a microtubule-enhanced ATPase activity. Binds ATP/ADP in vitro. Retains total enzymatic activity even after the removal of the ADP bound in the active site. The protein is Kinesin-like protein KIN-7D, chloroplastic of Oryza sativa subsp. japonica (Rice).